The primary structure comprises 492 residues: Dipeptide permease D (492 aa).

A run of 13 helical transmembrane segments spans residues 14–34 (VVALQIWEYFSFYGMRALLIL), 49–69 (ALFSAYCSLVYVTPILGGYLA), 91–111 (LVLGASETAPLFLYLSLAIIV), 138–158 (GGFSLMYAAGNIGSIIAPIAC), 167–187 (WAMGFALAAIGMVAGLVIFLC), 212–232 (NWGWLLVLLVTAPLLIAVLFW), 236–256 (SVYALIVATAIGLAVLARIYL), 269–289 (LIVVLTAFSLLFWAFAQQGGS), 312–332 (MFQSINAFAVMLCGMVLAWLV), 344–364 (IWGKFALGLGLMSAGFCILTL), 379–399 (LMVLGLAVMGFAELFIDPVAM), 413–433 (VLTGIYMLLSGAIANYLAGVI), and 458–478 (VFSQITWGALACVGVVLVIWL).

It belongs to the major facilitator superfamily. Proton-dependent oligopeptide transporter (POT/PTR) (TC 2.A.17) family. DtpD subfamily.

The protein localises to the cell inner membrane. In terms of biological role, probable proton-dependent permease that transports dipeptides. The polypeptide is Dipeptide permease D (Klebsiella pneumoniae subsp. pneumoniae (strain ATCC 700721 / MGH 78578)).